A 32-amino-acid polypeptide reads, in one-letter code: Cytochrome b6-f complex subunit 7 (32 aa).

A helical transmembrane segment spans residues 9-27; that stretch reads AVLSSVLVLVGLAIGFLLL.

The protein belongs to the PetM family. In terms of assembly, the 4 large subunits of the cytochrome b6-f complex are cytochrome b6, subunit IV (17 kDa polypeptide, PetD), cytochrome f and the Rieske protein, while the 4 small subunits are PetG, PetL, PetM and PetN. The complex functions as a dimer.

It localises to the plastid. The protein localises to the chloroplast thylakoid membrane. In terms of biological role, component of the cytochrome b6-f complex, which mediates electron transfer between photosystem II (PSII) and photosystem I (PSI), cyclic electron flow around PSI, and state transitions. The chain is Cytochrome b6-f complex subunit 7 from Pyropia yezoensis (Susabi-nori).